The chain runs to 462 residues: G-patch domain and KOW motifs-containing protein homolog 1 (462 aa).

Disordered stretches follow at residues 1–26 (MVEQTTSEPAAGSMPKISFGVKKREE) and 182–218 (LKLPNRRPPGLGLGATPKNPVGKNKNTGESSKAEEEK). The G-patch domain maps to 154–202 (IESFGLAILRGCNWKDGDGIGKNPQKVALKLPNRRPPGLGLGATPKNPV). Positions 221–248 (EIKVGSFIKVVDGRNKGVYGKVEGRDDD) constitute a KOW 1 domain. A compositionally biased stretch (basic and acidic residues) spans 289–305 (EYDKEKDRLETERKKLE). The segment at 289–337 (EYDKEKDRLETERKKLESQPPSTSTSQSSKDYKSKSSSSKHDKNSSEYE) is disordered. Over residues 306-317 (SQPPSTSTSQSS) the composition is skewed to low complexity. The segment covering 318–337 (KDYKSKSSSSKHDKNSSEYE) has biased composition (basic and acidic residues). A KOW 2 domain is found at 401–428 (PREIGEKLMIVAGKRSGQLAVMLDKDKR).

The protein belongs to the MOS2 family.

Its subcellular location is the nucleus. This Caenorhabditis elegans protein is G-patch domain and KOW motifs-containing protein homolog 1.